Reading from the N-terminus, the 215-residue chain is Na(+)-translocating NADH-quinone reductase subunit D (215 aa).

The next 6 helical transmembrane spans lie at 14-34, 42-62, 72-92, 103-123, 131-151, and 178-198; these read PFIS…ALAV, FVMA…ISLI, IIVQ…LLKA, VFVG…AYAM, FLDG…VGTI, and NGML…IWVL.

Belongs to the NqrDE/RnfAE family. Composed of six subunits; NqrA, NqrB, NqrC, NqrD, NqrE and NqrF.

Its subcellular location is the cell inner membrane. The catalysed reaction is a ubiquinone + n Na(+)(in) + NADH + H(+) = a ubiquinol + n Na(+)(out) + NAD(+). NQR complex catalyzes the reduction of ubiquinone-1 to ubiquinol by two successive reactions, coupled with the transport of Na(+) ions from the cytoplasm to the periplasm. NqrA to NqrE are probably involved in the second step, the conversion of ubisemiquinone to ubiquinol. The sequence is that of Na(+)-translocating NADH-quinone reductase subunit D from Tolumonas auensis (strain DSM 9187 / NBRC 110442 / TA 4).